We begin with the raw amino-acid sequence, 100 residues long: Large ribosomal subunit protein uL23 (100 aa).

The protein belongs to the universal ribosomal protein uL23 family. Part of the 50S ribosomal subunit. Contacts protein L29, and trigger factor when it is bound to the ribosome.

One of the early assembly proteins it binds 23S rRNA. One of the proteins that surrounds the polypeptide exit tunnel on the outside of the ribosome. Forms the main docking site for trigger factor binding to the ribosome. The sequence is that of Large ribosomal subunit protein uL23 from Shewanella sp. (strain MR-4).